A 301-amino-acid chain; its full sequence is MLTFQQIILKLQSYWDAQGCALLQPYDMEVGAGTSHTATFLRALGPEPWKAAYVQPSRRPKDGRYGENPNRLQHYYQYQVVLKPAPANILELYLGSLEALGFDLKKNDIRFVEDDWENPTLGAWGLGWEVWLNGMEVTQFTYFQQVGGIDCKPITGEITYGLERLAMYLQGVDNVYNLTWTDGLSYGDVYKQNEVEQSTYNFEHSDADFLFTAFTAHEKQAKHLIGVQLALPAYEQVLKAAHSFNLLDARGAISVTERAAYIGRIRNLARAVAQSYYESRERLGFPMAPREWVEQMTKKAA.

This sequence belongs to the class-II aminoacyl-tRNA synthetase family. Tetramer of two alpha and two beta subunits.

The protein localises to the cytoplasm. The catalysed reaction is tRNA(Gly) + glycine + ATP = glycyl-tRNA(Gly) + AMP + diphosphate. This Polaromonas sp. (strain JS666 / ATCC BAA-500) protein is Glycine--tRNA ligase alpha subunit.